A 534-amino-acid polypeptide reads, in one-letter code: MTSTPVSPVVLVILDGWGYQENSDGNAIATANTPIIDSLWTAYPSTFIQTSGKAVGLPAGQMGNSEVGHLNLGAGRTVPQELVRIADAIEDGSLATNPALDKVCKQVSQASTKLHLIGLCSKGGVHAHSDHLLALLKLAKEHNISQVCIHAILDGRDTPPKSAKDEILRLQKQIAHIGVGQIVTLSGRYFAMDRDRRWDRIQQAYDVMVNDQVAVPRDWSPLDAITDAYDHKTTDEFLPPTRIAPGAIEAGDGVIFFNFRPDRARQLTQAFVDPKFDGFEREQVKPLHFVTFTQYDSDLPTDVAFKPQNLDNILGEIVANHGLKQLRLAETEKYAHVTYFFNGGIEDPLPGEDRILVPSPMVSTYDQDPPMSAAKVTEEAIAALDKRIYSLMVINYANTDMVGHTGMMDATIQAVETVDGCLGKLLNQVINVGGTLLITADHGNAERMWDETGNPWTAHTTNPVPFILVEGEGRKIPAHGTDVQLRADGRLADIAPTILDILQLPKPEEMTGSTLIQAAGFEVRQNKSPVRIHR.

Mn(2+)-binding residues include aspartate 15 and serine 65. The active-site Phosphoserine intermediate is the serine 65. Substrate contacts are provided by residues histidine 126, 156–157, arginine 188, arginine 194, 260–263, and lysine 333; these read RD and RPDR. Mn(2+)-binding residues include aspartate 400, histidine 404, aspartate 441, histidine 442, and histidine 459.

The protein belongs to the BPG-independent phosphoglycerate mutase family. Monomer. Requires Mn(2+) as cofactor.

It catalyses the reaction (2R)-2-phosphoglycerate = (2R)-3-phosphoglycerate. It participates in carbohydrate degradation; glycolysis; pyruvate from D-glyceraldehyde 3-phosphate: step 3/5. Catalyzes the interconversion of 2-phosphoglycerate and 3-phosphoglycerate. The polypeptide is 2,3-bisphosphoglycerate-independent phosphoglycerate mutase (Acaryochloris marina (strain MBIC 11017)).